Here is a 496-residue protein sequence, read N- to C-terminus: MPTESGSCSTARQAKQKRKSHSLSIRRTNSSEQERTGLPREMLEGQDSKLPSSVRSTLLELFGQIEREFENLYIENLELRREIDTLNERLAGEGQAIDGAELSKGQLKTKASHSTSQLSQKLKTTYKASTSKIVSSFKTTTSRAICQLVKEYIGHRDGIWDVSVTRTQPIVLGTASADHTALLWSIETGKCLVKYAGHVGSVNSIKFHPSEQLALTASGDQTAHIWRYVVQLPTPQPVADTSQQISGEDEIECSDKDEPDIDGDVSSDCPTVRVPLTSLKSHQGVVIAADWLVGGKQVVTASWDRTANLYDVETSELVHSLTGHDQELTHCCTHPTQRLVVTSSRDTTFRLWDFRDPSIHSVNVFQGHTDTVTSAVFTVGDNVVSGSDDRTVKVWDLKNMRSPIATIRTDSAINRINVCVGQKIIALPHDNRQVRLFDMSGVRLARLPRSSRQGHRRMVCCSAWSEDHPICNLFTCGFDRQAIGWNINIPALLQEK.

Polar residues-rich tracts occupy residues 1–13 (MPTESGSCSTARQ) and 22–31 (SLSIRRTNSS). The tract at residues 1-50 (MPTESGSCSTARQAKQKRKSHSLSIRRTNSSEQERTGLPREMLEGQDSKL) is disordered. Positions 32 to 47 (EQERTGLPREMLEGQD) are enriched in basic and acidic residues. WD repeat units lie at residues 154 to 194 (GHRD…CLVK) and 197 to 236 (GHVGSVNSIKFHPSEQLALTASGDQTAHIWRYVVQLPTPQ). The tract at residues 238-267 (VADTSQQISGEDEIECSDKDEPDIDGDVSS) is disordered. The span at 247–265 (GEDEIECSDKDEPDIDGDV) shows a compositional bias: acidic residues. WD repeat units follow at residues 281–320 (SHQGVVIAADWLVGGKQVVTASWDRTANLYDVETSELVHS), 323–362 (GHDQELTHCCTHPTQRLVVTSSRDTTFRLWDFRDPSIHSV), 367–405 (GHTDTVTSAVFTVGDNVVSGSDDRTVKVWDLKNMRSPIA), 408–447 (RTDSAINRINVCVGQKIIALPHDNRQVRLFDMSGVRLARL), and 454–495 (GHRR…LLQE).

As to quaternary structure, forms homodimers. Interacts with PACS1. Interacts with PACS2.

It is found in the cytoplasm. It localises to the nucleus. Functionally, required for normal ER Ca2+ handling in lymphocytes. Together with PACS1, it plays an essential role in stabilizing peripheral lymphocyte populations. The sequence is that of WD repeat-containing protein 37 (Wdr37) from Mus musculus (Mouse).